The primary structure comprises 192 residues: 7-methyl-GTP pyrophosphatase (192 aa).

Residue Asp69 is the Proton acceptor of the active site.

This sequence belongs to the Maf family. YceF subfamily. A divalent metal cation is required as a cofactor.

The protein localises to the cytoplasm. It catalyses the reaction N(7)-methyl-GTP + H2O = N(7)-methyl-GMP + diphosphate + H(+). Nucleoside triphosphate pyrophosphatase that hydrolyzes 7-methyl-GTP (m(7)GTP). May have a dual role in cell division arrest and in preventing the incorporation of modified nucleotides into cellular nucleic acids. This chain is 7-methyl-GTP pyrophosphatase, found in Pseudomonas fluorescens (strain ATCC BAA-477 / NRRL B-23932 / Pf-5).